Here is a 171-residue protein sequence, read N- to C-terminus: MENFYKVGTIVNTQGLQGEVRILPSTDFANERFSKGAVLALFDDKDNYIQDLKVKSGRLQKNFYVVKFEGFYHINDVEKYKGYVVKIAQENQEELNDGEFYYHEIIGSDVYDNDILIGQISEILQPGANDVWVVKRKGKRDLLLPYIPPVVLKVDVAQHRVDVDIMEGLDD.

The 73-residue stretch at aspartate 97–leucine 169 folds into the PRC barrel domain.

It belongs to the RimM family. As to quaternary structure, binds ribosomal protein uS19.

Its subcellular location is the cytoplasm. In terms of biological role, an accessory protein needed during the final step in the assembly of 30S ribosomal subunit, possibly for assembly of the head region. Essential for efficient processing of 16S rRNA. May be needed both before and after RbfA during the maturation of 16S rRNA. It has affinity for free ribosomal 30S subunits but not for 70S ribosomes. The polypeptide is Ribosome maturation factor RimM (Lactococcus lactis subsp. cremoris (strain MG1363)).